The sequence spans 189 residues: Small ribosomal subunit protein uS5 (189 aa).

The S5 DRBM domain occupies 22–85 (FVDKLVAINR…EAAKRELIFV (64 aa)).

The protein belongs to the universal ribosomal protein uS5 family. Part of the 30S ribosomal subunit. Contacts proteins S4 and S8.

With S4 and S12 plays an important role in translational accuracy. Its function is as follows. Located at the back of the 30S subunit body where it stabilizes the conformation of the head with respect to the body. The protein is Small ribosomal subunit protein uS5 of Rhizobium etli (strain CIAT 652).